The following is a 540-amino-acid chain: Sesquiterpene synthase 15b (540 aa).

Positions 292, 296, and 445 each coordinate Mg(2+). A DDXXD motif motif is present at residues 292-296 (DDIYD).

It belongs to the terpene synthase family. Tpsa subfamily. Mg(2+) serves as cofactor. The cofactor is Mn(2+).

The enzyme catalyses (2E,6E)-farnesyl diphosphate = germacrene A + diphosphate. It functions in the pathway secondary metabolite biosynthesis; terpenoid biosynthesis. Its function is as follows. Sesquiterpene synthase involved in the biosynthesis of volatile compounds. Mediates the conversion of (2E,6E)-farnesyl diphosphate (FPP) into germacrene A. This chain is Sesquiterpene synthase 15b, found in Solanum habrochaites (Wild tomato).